A 277-amino-acid polypeptide reads, in one-letter code: Carbonyl reductase [NADPH] 1 (277 aa).

Residue Ser2 is modified to N-acetylserine. Residues Ser2 and Ser30 each carry the phosphoserine modification. NADP(+) contacts are provided by residues 10 to 34 (VTGG…GDVV), 63 to 64 (DI), and Asn90. Glutathione contacts are provided by residues 95–97 (FKV) and Gln106. Position 140 (Ser140) interacts with substrate. A glutathione-binding site is contributed by 193–194 (AY). The active-site Proton acceptor is the Tyr194. Residues 194 to 198 (YGVTK) and 231 to 233 (VRT) each bind NADP(+). Position 239 is an N6-1-carboxyethyl lysine (Lys239).

Belongs to the short-chain dehydrogenases/reductases (SDR) family. In terms of assembly, monomer. As to expression, expressed in kidney (at protein level).

It is found in the cytoplasm. The enzyme catalyses a secondary alcohol + NADP(+) = a ketone + NADPH + H(+). It catalyses the reaction a primary alcohol + NADP(+) = an aldehyde + NADPH + H(+). It carries out the reaction prostaglandin F2alpha + NADP(+) = prostaglandin E2 + NADPH + H(+). The catalysed reaction is prostaglandin E1 + NADP(+) = 15-oxoprostaglandin E1 + NADPH + H(+). The enzyme catalyses menadione + NADPH + H(+) = menadiol + NADP(+). It catalyses the reaction prostaglandin D2 + NADP(+) = 15-oxoprostaglandin D2 + NADPH + H(+). It carries out the reaction prostaglandin E2 + NADP(+) = 15-oxoprostaglandin E2 + NADPH + H(+). The catalysed reaction is prostaglandin F2alpha + NADP(+) = 15-oxoprostaglandin F2alpha + NADPH + H(+). The enzyme catalyses daunorubicin + NADPH + H(+) = 13-dihydrodaunorubicin + NADP(+). It catalyses the reaction S-nitrosoglutathione + NADPH + H(+) = S-(hydroxysulfenamide)glutathione + NADP(+). It carries out the reaction cortisol + NADPH + H(+) = 20beta-dihydrocortisol + NADP(+). The catalysed reaction is corticosterone + NADPH + H(+) = 20beta-dihydrocorticosterone + NADP(+). Its activity is regulated as follows. Inhibited by quercetin, rutenin and its derivatives. In terms of biological role, NADPH-dependent reductase with broad substrate specificity. Catalyzes the reduction of a wide variety of carbonyl compounds including quinones, prostaglandins, menadione, plus various xenobiotics. Catalyzes the reduction of the antitumor anthracyclines doxorubicin and daunorubicin to the cardiotoxic compounds doxorubicinol and daunorubicinol. Can convert prostaglandin E to prostaglandin F2-alpha. Can bind glutathione, which explains its higher affinity for glutathione-conjugated substrates. Catalyzes the reduction of S-nitrosoglutathione. In addition, participates in the glucocorticoid metabolism by catalyzing the NADPH-dependent cortisol/corticosterone into 20beta-dihydrocortisol (20b-DHF) or 20beta-corticosterone (20b-DHB), which are weak agonists of NR3C1 and NR3C2 in adipose tissue. This chain is Carbonyl reductase [NADPH] 1, found in Homo sapiens (Human).